The primary structure comprises 169 residues: Required for excision 1-B domain-containing protein (169 aa).

The polypeptide is Required for excision 1-B domain-containing protein (Mus musculus (Mouse)).